We begin with the raw amino-acid sequence, 553 residues long: Retrotransposon Gag-like protein 3 (553 aa).

Residues 2–43 (VEDLAASYVTLKLENEILQAQVKRLMEENAALQAQIPELQKS) are a coiled coil. Disordered regions lie at residues 38-274 (PELQ…PLDP) and 474-514 (SGGV…EAER). Residues 45–57 (AVKEHEPLRKPSE) show a composition bias toward basic and acidic residues. Residues 58 to 73 (AQEPPESPEFPAARES) are compositionally biased toward low complexity. Positions 87–113 (EPTKIREPREPSAISELREPPEIKEPQ) are enriched in basic and acidic residues. The span at 118–127 (TNESGESSAI) shows a compositional bias: polar residues. Basic and acidic residues predominate over residues 132 to 147 (GSPEIKEPHLPPKSKE). Residues 239-250 (QTVPEYQETSSQ) show a composition bias toward polar residues. Residues 474 to 483 (SGGVDSSSSS) show a composition bias toward low complexity. Positions 495 to 507 (TENQPVQATSNRP) are enriched in polar residues. The CCHC-type zinc finger occupies 523 to 537 (CLYCGHPGHFARDCP).

In terms of tissue distribution, expressed in embryonic myogenic progenitor cells, not expressed in adult and aged satellite cells.

It localises to the nucleus. May function as a transcriptional regulator. Plays a role in postnatal myogenesis, may be involved in the regulation of satellite cells self-renewal. The protein is Retrotransposon Gag-like protein 3 of Mus musculus (Mouse).